The following is a 431-amino-acid chain: MKKLTFHPDDSVHAFITTIPEVTYGDGPLSGVTVAVKDNISTKGIETTCASKILKGYIPPYDAHVVTLLKNAGAAIVGKTNMDEFGMGTTTENSAYGPTLNPLDHQRVPGGSSGGSAAAVAAGLVDCAIGSDTGGSIRCPAAFCGIVGLKPTYGRVSRFGLIAYANSLEQIGPMARDVQTLSNLYSVIAGHDSRDATSVDKPYKHNPVSDITGLKIGVPDEFFGEGVNPNVAEVVRQAIDTLESMGATAVPCTIPSMKYALSAYYVTCTSEASSNLARFDGVRYGPAVGTLKSWHDAYSEQRKAGFGKEVRRRIILGTFSLAAGYYGRYYQKAQTARQMVRDDFERIFRDVDVIAGPTMPDIAFKLGEKSDPLQMYLSDILTVPANLAGVPALSVPCGKINSMPVGLQLIGRYFEDERIIDTAYAYEQGRA.

Active-site charge relay system residues include K37 and S112. Residue S136 is the Acyl-ester intermediate of the active site.

This sequence belongs to the amidase family. GatA subfamily. In terms of assembly, heterotrimer of A, B and C subunits.

It carries out the reaction L-glutamyl-tRNA(Gln) + L-glutamine + ATP + H2O = L-glutaminyl-tRNA(Gln) + L-glutamate + ADP + phosphate + H(+). In terms of biological role, allows the formation of correctly charged Gln-tRNA(Gln) through the transamidation of misacylated Glu-tRNA(Gln) in organisms which lack glutaminyl-tRNA synthetase. The reaction takes place in the presence of glutamine and ATP through an activated gamma-phospho-Glu-tRNA(Gln). This chain is Glutamyl-tRNA(Gln) amidotransferase subunit A, found in Methanospirillum hungatei JF-1 (strain ATCC 27890 / DSM 864 / NBRC 100397 / JF-1).